Reading from the N-terminus, the 376-residue chain is Probable cysteine protease RDL3 (376 aa).

The N-terminal stretch at 1–27 (MAISFRTLALLTLSVLLISISLGVVTA) is a signal peptide. Positions 28-126 (TESQRNEGEV…ERYQYKEGDV (99 aa)) are cleaved as a propeptide — activation peptide. A glycan (N-linked (GlcNAc...) asparagine) is linked at N80. Disulfide bonds link C149-C192 and C183-C226. The active site involves C152. N270 is a glycosylation site (N-linked (GlcNAc...) asparagine). C283 and C336 are joined by a disulfide. Residues H290 and N311 contribute to the active site. The N-linked (GlcNAc...) asparagine glycan is linked to N349.

This sequence belongs to the peptidase C1 family. As to expression, expressed in root hairs.

In terms of biological role, probable thiol protease. This chain is Probable cysteine protease RDL3, found in Arabidopsis thaliana (Mouse-ear cress).